Reading from the N-terminus, the 130-residue chain is Small ribosomal subunit protein uS9 (130 aa).

This sequence belongs to the universal ribosomal protein uS9 family.

The sequence is that of Small ribosomal subunit protein uS9 from Leptothrix cholodnii (strain ATCC 51168 / LMG 8142 / SP-6) (Leptothrix discophora (strain SP-6)).